We begin with the raw amino-acid sequence, 866 residues long: MSEEVKEVKILEKPWVEKYRPQRLEDIVGQDHIVKRLKHYVKTGSMPHLLFAGPPGVGKCLTGDAKVIANGRLFELGELVEKVSKGRFGPTPVEGLKVLGIDEDGKLREFEVQYVYKDRAERLIKVRTRLGRELKVTPYHPLLVNRKNGEIMWVKAEELRPGDRLAVPRFLPAIAEEDPLAEWLGYFIGDGHADSKNKVITFTNTDPSLRQRFMELTERLFPDAKIRERIHKNRAPDVYVNSRRAWELVSSLGLAGRKADKVYIPEKGWEGIRSFLRAYFDCDAGVDKNAVVLATASREMAEQVTYALAGFGITSKIREKKVRGKTYYHVTISGSENLERFLSEIGFSHREKLERTLKLVKKPNPNLDSLNVNYELISYVRDRLKLNFSDDKRSWSHRKARKISWELMKEIYYRLDELERLKESLSRSILIDWNEMAERRKEIAEKTGIRADRLLEYIKGKRKPSLRNYIKIAKALGIDLEPTINAMRVFARKYSSYAEIGRKLGTWNSSVRIILESNTEKIKELEEIRKIELELIGEILSDEKLKEGVAYLIFLSQNELYWDEITEVKELKGDFVIYDLHVPGYHNFIAGNMPTVVHNTTAALALARELFGENWRHNFLELNASDERGINVIREKVKEFARTKPIGGASFKIIFLDEADALTQDAQQALRRTMEMFSNNVRFILSCNYSSKIIEPIQSRCAIFRFRPLRDEDIAKRIRYIAENEGLELTEEGLQAILYVAEGDLRRAINVLQAAAALDTKITDENVFLVASRARPEDVREMMTLALEGNFLKAREKLRDILLRQGLSGEDVLIQMHKEVFNLPIPEDKKVALADKIGEYNFRLVEGANEMIQLEALLAQFTIMGK.

In terms of domain architecture, DOD-type homing endonuclease spans 183–313; that stretch reads WLGYFIGDGH…VTYALAGFGI (131 aa).

Belongs to the activator 1 small subunits family. RfcS subfamily. Heteromultimer composed of small subunits (RfcS) and large subunits (RfcL). This protein undergoes a protein self splicing that involves a post-translational excision of the intervening region (intein) followed by peptide ligation.

Part of the RFC clamp loader complex which loads the PCNA sliding clamp onto DNA. The protein is Replication factor C small subunit (rfcS) of Thermococcus kodakarensis (strain ATCC BAA-918 / JCM 12380 / KOD1) (Pyrococcus kodakaraensis (strain KOD1)).